The primary structure comprises 112 residues: Large ribosomal subunit protein eL30 (112 aa).

The protein belongs to the eukaryotic ribosomal protein eL30 family.

The chain is Large ribosomal subunit protein eL30 (RPL30) from Zea mays (Maize).